A 408-amino-acid chain; its full sequence is Succinylornithine transaminase (408 aa).

Residue lysine 252 is modified to N6-(pyridoxal phosphate)lysine.

The protein belongs to the class-III pyridoxal-phosphate-dependent aminotransferase family. AstC subfamily. Pyridoxal 5'-phosphate serves as cofactor.

It catalyses the reaction N(2)-succinyl-L-ornithine + 2-oxoglutarate = N-succinyl-L-glutamate 5-semialdehyde + L-glutamate. The protein operates within amino-acid degradation; L-arginine degradation via AST pathway; L-glutamate and succinate from L-arginine: step 3/5. Catalyzes the transamination of N(2)-succinylornithine and alpha-ketoglutarate into N(2)-succinylglutamate semialdehyde and glutamate. Can also act as an acetylornithine aminotransferase. The protein is Succinylornithine transaminase of Salmonella agona (strain SL483).